Consider the following 476-residue polypeptide: MPLAEGSTFAGFTIVRQLGSGGMGEVYLARHPRLPRQDALKVLRADVSADGEYRARFNREADAAASLWHPHIVAVHDRGEFDGQLWIDMDFVDGTDTVSLLRDRYPNGMPGPEVTEIITAVAEALDYAHERRLLHRDVKPANILIANPDSPDRRIMLADFGIAGWVDDPSGLTATNMTVGTVSYAAPEQLMGNELDGRADQYALAATAFHLLTGSPPFQHANPAVVISQHLSASPPAIGDRVPELTPLDPVFAKALAKQPKDRYQRCVDFARALGHRLGGAGDPDDTRVSQPVAVAAPAKRSLLRTAVIVPAVLAMLLVMAVAVTVREFQRADDERAAQPARTRTTTSAGTTTSVAPASTTRPAPTTPTTTGAADTATASPTAAVVAIGALCFPLGSTGTTKTGATAYCSTLQGTNTTIWSLTEDTVASPTVTATADPTEAPLPIEQESPIRVCMQQTGQTRRECREEIRRSNGWP.

Phosphothreonine; by autocatalysis occurs at positions 8 and 13. Residues F12–G279 enclose the Protein kinase domain. ATP-binding positions include L18 to V26 and K41. D137 acts as the Proton acceptor in catalysis. A phosphothreonine; by autocatalysis mark is found at T173, T175, and T287. The residue at position 290 (S290) is a Phosphoserine; by autocatalysis. Residues A332–T376 are disordered. Low complexity predominate over residues A338 to T376.

Belongs to the protein kinase superfamily. Ser/Thr protein kinase family. Dephosphorylated by PstP.

It catalyses the reaction L-seryl-[protein] + ATP = O-phospho-L-seryl-[protein] + ADP + H(+). The enzyme catalyses L-threonyl-[protein] + ATP = O-phospho-L-threonyl-[protein] + ADP + H(+). This Mycobacterium bovis (strain ATCC BAA-935 / AF2122/97) protein is Serine/threonine-protein kinase PknF (pknF).